A 209-amino-acid chain; its full sequence is Ribosomal RNA large subunit methyltransferase E (209 aa).

Gly-63, Trp-65, Asp-83, Asp-99, and Asp-124 together coordinate S-adenosyl-L-methionine. The active-site Proton acceptor is Lys-164.

Belongs to the class I-like SAM-binding methyltransferase superfamily. RNA methyltransferase RlmE family.

The protein resides in the cytoplasm. The enzyme catalyses uridine(2552) in 23S rRNA + S-adenosyl-L-methionine = 2'-O-methyluridine(2552) in 23S rRNA + S-adenosyl-L-homocysteine + H(+). Functionally, specifically methylates the uridine in position 2552 of 23S rRNA at the 2'-O position of the ribose in the fully assembled 50S ribosomal subunit. The protein is Ribosomal RNA large subunit methyltransferase E of Aeromonas salmonicida (strain A449).